The following is a 348-amino-acid chain: MPEEKIRLTQLSHGGGCGCKIAPAVLQKILAGTTGSIIPPQLLVGTETSDDAAVYQINAQQAIVATTDFFMPIVDNPRDFGRIAATNAISDVYAMGGTPLFALALVGMPVNVLPLETIGQILQGGEDVCRAAGIPIAGGHTIDSVEPIYGLVAIGLVNPEHLKRNSGAKSGDKLILGKQLGVGIYSAALKKDQLQAKDYEAMVETTTQLNTPGPVLACLDGVHAVTDVTGFGLAGHLLEVCKGSGLRATVNYQDLPVLPKAREFMQAGLMTGASGRNWASYGEGVRIADGLEGIAQTLLTDPQTSGGLLVSCSPETVTEVLSLFLQHGFPHVSVIGEMAEGEPGIDVI.

C17 is an active-site residue. ATP-binding positions include K20 and 48 to 50; that span reads TSD. D51 serves as a coordination point for Mg(2+). Residues D68, D91, and 139-141 contribute to the ATP site; that span reads GHT. Residue D91 participates in Mg(2+) binding. Position 227 (D227) interacts with Mg(2+).

It belongs to the selenophosphate synthase 1 family. Class I subfamily. Homodimer. The cofactor is Mg(2+).

The enzyme catalyses hydrogenselenide + ATP + H2O = selenophosphate + AMP + phosphate + 2 H(+). Functionally, synthesizes selenophosphate from selenide and ATP. This is Selenide, water dikinase from Dechloromonas aromatica (strain RCB).